Here is a 703-residue protein sequence, read N- to C-terminus: Polyribonucleotide nucleotidyltransferase (703 aa).

Positions 487 and 493 each coordinate Mg(2+). One can recognise a KH domain in the interval 554-613; that stretch reads PKMETIKIDPDKIRDVIGKGGATIRSICEDTGASIDIDDNGTVRIYAESKLAADEAIYRI. Positions 623-691 constitute an S1 motif domain; that stretch reads GKLYRGKVER…ARGRIKLSMK (69 aa).

Belongs to the polyribonucleotide nucleotidyltransferase family. As to quaternary structure, component of the RNA degradosome, which is a multiprotein complex involved in RNA processing and mRNA degradation. The cofactor is Mg(2+).

Its subcellular location is the cytoplasm. It carries out the reaction RNA(n+1) + phosphate = RNA(n) + a ribonucleoside 5'-diphosphate. In terms of biological role, involved in mRNA degradation. Catalyzes the phosphorolysis of single-stranded polyribonucleotides processively in the 3'- to 5'-direction. This is Polyribonucleotide nucleotidyltransferase from Hahella chejuensis (strain KCTC 2396).